Reading from the N-terminus, the 1241-residue chain is ATP-dependent helicase/nuclease subunit A (1241 aa).

Residues 12-485 (SQWTDDQWKA…IDLAKNFRSR (474 aa)) enclose the UvrD-like helicase ATP-binding domain. 33–40 (AAAGSGKT) serves as a coordination point for ATP. One can recognise a UvrD-like helicase C-terminal domain in the interval 505–805 (GEIDYDADAE…RIMTIHKSKG (301 aa)).

It belongs to the helicase family. AddA subfamily. Heterodimer of AddA and AddB/RexB. Mg(2+) is required as a cofactor.

It catalyses the reaction Couples ATP hydrolysis with the unwinding of duplex DNA by translocating in the 3'-5' direction.. The enzyme catalyses ATP + H2O = ADP + phosphate + H(+). Functionally, the heterodimer acts as both an ATP-dependent DNA helicase and an ATP-dependent, dual-direction single-stranded exonuclease. Recognizes the chi site generating a DNA molecule suitable for the initiation of homologous recombination. The AddA nuclease domain is required for chi fragment generation; this subunit has the helicase and 3' -&gt; 5' nuclease activities. This Bacillus cereus (strain ATCC 14579 / DSM 31 / CCUG 7414 / JCM 2152 / NBRC 15305 / NCIMB 9373 / NCTC 2599 / NRRL B-3711) protein is ATP-dependent helicase/nuclease subunit A.